We begin with the raw amino-acid sequence, 145 residues long: Peptide methionine sulfoxide reductase MsrB (145 aa).

The MsrB domain maps to 4 to 127 (SDELKQRIGD…NSAALKFIPY (124 aa)). Cysteine 116 serves as the catalytic Nucleophile.

It belongs to the MsrB Met sulfoxide reductase family.

The catalysed reaction is L-methionyl-[protein] + [thioredoxin]-disulfide + H2O = L-methionyl-(R)-S-oxide-[protein] + [thioredoxin]-dithiol. The sequence is that of Peptide methionine sulfoxide reductase MsrB from Streptococcus pyogenes serotype M1.